Reading from the N-terminus, the 371-residue chain is Chaperone protein DnaJ (371 aa).

Residues 5 to 69 form the J domain; it reads DYYEVLGLSK…QKRAQYDQFG (65 aa). The CR-type zinc finger occupies 133–215; sequence GKELNVEIPV…CHGSGKVRKR (83 aa). Zn(2+) contacts are provided by cysteine 146, cysteine 149, cysteine 163, cysteine 166, cysteine 189, cysteine 192, cysteine 203, and cysteine 206. CXXCXGXG motif repeat units follow at residues 146–153, 163–170, 189–196, and 203–210; these read CDTCKGSG, CKHCSGSG, CGHCSGTG, and CTTCHGSG.

The protein belongs to the DnaJ family. Homodimer. Zn(2+) serves as cofactor.

The protein resides in the cytoplasm. Its function is as follows. Participates actively in the response to hyperosmotic and heat shock by preventing the aggregation of stress-denatured proteins and by disaggregating proteins, also in an autonomous, DnaK-independent fashion. Unfolded proteins bind initially to DnaJ; upon interaction with the DnaJ-bound protein, DnaK hydrolyzes its bound ATP, resulting in the formation of a stable complex. GrpE releases ADP from DnaK; ATP binding to DnaK triggers the release of the substrate protein, thus completing the reaction cycle. Several rounds of ATP-dependent interactions between DnaJ, DnaK and GrpE are required for fully efficient folding. Also involved, together with DnaK and GrpE, in the DNA replication of plasmids through activation of initiation proteins. The chain is Chaperone protein DnaJ from Bacillus cereus (strain ATCC 10987 / NRS 248).